The sequence spans 163 residues: Protein LOL5 (163 aa).

2 stretches are compositionally biased toward polar residues: residues 1–25 (MSQLPLASQATTTDLVSTTAMQPQS) and 33–44 (LQPQHPPSSTAH). The interval 1 to 51 (MSQLPLASQATTTDLVSTTAMQPQSEGIVDESLQPQHPPSSTAHDSPCLQD) is disordered. Putative zinc finger regions lie at residues 70–100 (QMVCGSCRILLAYFRGAGYVHCTCCQTMNYV) and 108–138 (KVHCGHCATLLMYPFGAPAVKCSLCLFVTEI).

The protein resides in the nucleus. In terms of biological role, involved in plant growth and disease resistance. The sequence is that of Protein LOL5 (LOL5) from Oryza sativa subsp. japonica (Rice).